Here is a 358-residue protein sequence, read N- to C-terminus: Peptide chain release factor 1 (358 aa).

Gln237 is subject to N5-methylglutamine.

It belongs to the prokaryotic/mitochondrial release factor family. In terms of processing, methylated by PrmC. Methylation increases the termination efficiency of RF1.

Its subcellular location is the cytoplasm. Functionally, peptide chain release factor 1 directs the termination of translation in response to the peptide chain termination codons UAG and UAA. The sequence is that of Peptide chain release factor 1 from Streptomyces coelicolor (strain ATCC BAA-471 / A3(2) / M145).